Reading from the N-terminus, the 652-residue chain is Anaphase-promoting complex subunit 4 (652 aa).

The APC/C is composed of at least 13 subunits that stay tightly associated throughout the cell cycle: APC1, APC2, APC4, APC5, APC9, APC11, CDC16, CDC23, CDC26, CDC27, DOC1, MND2 and SWM1.

The protein localises to the cytoplasm. Its subcellular location is the nucleus. It participates in protein modification; protein ubiquitination. In terms of biological role, component of the anaphase promoting complex/cyclosome (APC/C), a cell cycle-regulated E3 ubiquitin-protein ligase complex that controls progression through mitosis and the G1 phase of the cell cycle. The APC/C is thought to confer substrate specificity and, in the presence of ubiquitin-conjugating E2 enzymes, it catalyzes the formation of protein-ubiquitin conjugates that are subsequently degraded by the 26S proteasome. In early mitosis, the APC/C is activated by CDC20 and targets securin PDS1, the B-type cyclin CLB5, and other anaphase inhibitory proteins for proteolysis, thereby triggering the separation of sister chromatids at the metaphase-to-anaphase transition. In late mitosis and in G1, degradation of CLB5 allows activation of the APC/C by CDH1, which is needed to destroy CDC20 and the B-type cyclin CLB2 to allow exit from mitosis and creating the low CDK state necessary for cytokinesis and for reforming prereplicative complexes in G1 prior to another round of replication. The polypeptide is Anaphase-promoting complex subunit 4 (APC4) (Saccharomyces cerevisiae (strain ATCC 204508 / S288c) (Baker's yeast)).